Here is a 617-residue protein sequence, read N- to C-terminus: Secretogranin-2 (617 aa).

The signal sequence occupies residues 1 to 27 (MAEAKTHWLGAALSLIPLIFLISGAEA). A propeptide spanning residues 28-30 (ASF) is cleaved from the precursor. Positions 123–147 (NEPQSVPKENKPHALNSEKNFPIDM) are disordered. The residue at position 151 (Tyr151) is a Sulfotyrosine. Ser174, Ser268, Ser432, Ser532, Ser555, and Ser556 each carry phosphoserine. The segment at 552–583 (NQGSSQETDKLAPVSKRFPVGPPKNDDTPNRQ) is disordered.

This sequence belongs to the chromogranin/secretogranin protein family. Interacts with Secretogranin III/SCG3.

The protein localises to the secreted. Neuroendocrine protein of the granin family that regulates the biogenesis of secretory granules. The chain is Secretogranin-2 (SCG2) from Macaca fascicularis (Crab-eating macaque).